The following is a 155-amino-acid chain: Phosphopantetheine adenylyltransferase (155 aa).

The protein belongs to the eukaryotic CoaD family.

It localises to the cytoplasm. It catalyses the reaction (R)-4'-phosphopantetheine + ATP + H(+) = 3'-dephospho-CoA + diphosphate. The protein operates within cofactor biosynthesis; coenzyme A biosynthesis. Reversibly transfers an adenylyl group from ATP to 4'-phosphopantetheine, yielding dephospho-CoA (dPCoA) and pyrophosphate. The protein is Phosphopantetheine adenylyltransferase of Pyrobaculum aerophilum (strain ATCC 51768 / DSM 7523 / JCM 9630 / CIP 104966 / NBRC 100827 / IM2).